A 212-amino-acid polypeptide reads, in one-letter code: uncharacterized protein (212 aa).

This is an uncharacterized protein from Mycobacterium tuberculosis (strain ATCC 25618 / H37Rv).